The chain runs to 534 residues: MQAPVVFMNASQERTTGRQAQISNITAAKAVADVIRTCLGPKAMLKMLLDPMGGLVLTNDGHAILREIDVAHPAAKSMLELSRTQDEEVGDGTTTVIILAGEILAQCAPYLIEKNIHPVIIIQALKKALTDALEVIKQVSKPVDVENDAAMKKLIQASIGTKYVIHWSEKMCELALDAVKTVRKDLGQTVEGEPNFEIDIKRYVRVEKIPGGDVLDSRVLKGVLLNKDVVHPKMSRHIENPRVVLLDCPLEYKKGESQTNIEIEKEEDWNRILQIEEEQVQLMCEQILAVRPTLVITEKGVSDLAQHYLLKGGCSVLRRVKKSDNNRIARVTGATIVNRVEDLKESDVGTNCGLFKVEMIGDEYFSFLDNCKEPKACTIMLRGGSKDILNEIDRNLQDAMAVARNVMLSPSLSPGGGATEMAVSVKLAEKAKQLEGIQQWPYQAVADAMECIPRTLIQNAGGDPIRLLSQLRAKHAQGNFTTGIDGDKGKIVDMVSYGIWEPEVIKQQSVKTAIESACLLLRVDDIVSGVRKQE.

M1 bears the N-acetylmethionine mark. The residue at position 257 (S257) is a Phosphoserine. C371 and C377 are disulfide-bonded.

The protein belongs to the TCP-1 chaperonin family. Heterooligomeric complex of about 850 to 900 kDa that forms two stacked rings, 12 to 16 nm in diameter.

It is found in the cytoplasm. Molecular chaperone; assists the folding of proteins upon ATP hydrolysis. Known to play a role, in vitro, in the folding of actin and tubulin. In yeast may play a role in mitotic spindle formation. The protein is T-complex protein 1 subunit gamma (CCT3) of Saccharomyces cerevisiae (strain ATCC 204508 / S288c) (Baker's yeast).